A 762-amino-acid chain; its full sequence is MAIQTSNLGYPRIGLQREWKKTLEAFWSNKINEEQFLTTMKEIRLQHVKVQQEKGIELIPIGDFTYYDHVLDTAYMLGFIPSRFSEFTSYLDVYFAMARGSKDHVASEMTKWFNTNYHYIVPEYEEGLQISLKDNRPLRLYEEAKQELGVDGKPVILGPYTFLKLAKGYTQEQFATILKQLVAPYVQLLSELHAAGAQIIQVDEPIFASLTKEEVQQAKEIYEAIRKEVPNATLLLQTYFDSVEENYEEIITFPVSSIGLDFVHGKEGNLNAISKYGFPADKTLAVGCIDGRNIWRADLDEVLTLFTTLQKQVQTKDLIVQPSCSLLHTPIDKTEETHLSTELFDALAFANQKLEELVLTHSALTQGTESISNELETYRNVHHTIRSSAARNREDVKAARTALKEEDFSRPLPFEKRYELQQVALKLPLLPTTTIGSFPQTTEVRQTRKEWRNGIISNEQYEQFIEKETEKWIRYQEEIGLDVLVHGEFERTDMVEYFGERLAGFSFTKNGWVQSYGSRCVKPPVIYGDVAFINGMTIKETVYAQSLTEKVVKGMLTGPVTILNWSFVRNDIPRKEVSYQIALALRHEIELLESSGIRVIQVDEPALREGMPLKEKDWDAYITWAVQSFLLATSSVANETQIHTHMCYSNFEDIVDAIRALDADVISIETSRSHGEFIDTLKHTTYEKGIGLGVYDIHSPRVPSKDEMYKIVEQSLQVCDPKYFWINPDCGLKTRRTEEVIPALEHMVQAAKDARSLLKTNA.

5-methyltetrahydropteroyltri-L-glutamate is bound by residues 17–20 (REWK) and K111. Residues 435–437 (IGS) and E488 contribute to the L-homocysteine site. L-methionine is bound by residues 435–437 (IGS) and E488. Residues 519–520 (RC) and W565 contribute to the 5-methyltetrahydropteroyltri-L-glutamate site. D603 is an L-homocysteine binding site. An L-methionine-binding site is contributed by D603. Position 609 (E609) interacts with 5-methyltetrahydropteroyltri-L-glutamate. Residues H645, C647, and E669 each coordinate Zn(2+). The active-site Proton donor is the H698. Residue C730 coordinates Zn(2+).

It belongs to the vitamin-B12 independent methionine synthase family. Zn(2+) is required as a cofactor.

The catalysed reaction is 5-methyltetrahydropteroyltri-L-glutamate + L-homocysteine = tetrahydropteroyltri-L-glutamate + L-methionine. It functions in the pathway amino-acid biosynthesis; L-methionine biosynthesis via de novo pathway; L-methionine from L-homocysteine (MetE route): step 1/1. Catalyzes the transfer of a methyl group from 5-methyltetrahydrofolate to homocysteine resulting in methionine formation. The chain is 5-methyltetrahydropteroyltriglutamate--homocysteine methyltransferase from Bacillus cereus (strain AH820).